We begin with the raw amino-acid sequence, 336 residues long: Protein FPV127 (336 aa).

A disordered region spans residues 1-22 (MGGGLVLPTRDPPKEQDTSETA).

This sequence belongs to the poxviruses A16/G9/J5 family.

The chain is Protein FPV127 from Vertebrata (FPV).